The sequence spans 65 residues: Ferredoxin-like protein in vnf region (65 aa).

4Fe-4S ferredoxin-type domains follow at residues Ala-2 to Gly-29 and Gly-30 to Asp-65. [4Fe-4S] cluster is bound by residues Cys-10, Cys-13, Cys-16, Cys-20, Cys-39, Cys-42, Cys-50, and Cys-54.

The cofactor is [4Fe-4S] cluster.

This is Ferredoxin-like protein in vnf region from Azotobacter chroococcum mcd 1.